A 197-amino-acid chain; its full sequence is Imidazoleglycerol-phosphate dehydratase (197 aa).

This sequence belongs to the imidazoleglycerol-phosphate dehydratase family.

It localises to the cytoplasm. It carries out the reaction D-erythro-1-(imidazol-4-yl)glycerol 3-phosphate = 3-(imidazol-4-yl)-2-oxopropyl phosphate + H2O. It functions in the pathway amino-acid biosynthesis; L-histidine biosynthesis; L-histidine from 5-phospho-alpha-D-ribose 1-diphosphate: step 6/9. The protein is Imidazoleglycerol-phosphate dehydratase of Xanthobacter autotrophicus (strain ATCC BAA-1158 / Py2).